The primary structure comprises 158 residues: Single-stranded DNA-binding protein 2 (158 aa).

The SSB domain occupies 1-107 (MNETIVCVVG…IDALAVGHDL (107 aa)). The disordered stretch occupies residues 109 to 158 (RGTSAFRRPSAKDGEAGVSPAARPEPNWETEPGSQPSVEHQPQPEPAGVT).

In terms of assembly, homotetramer.

The protein is Single-stranded DNA-binding protein 2 (ssb2) of Streptomyces avermitilis (strain ATCC 31267 / DSM 46492 / JCM 5070 / NBRC 14893 / NCIMB 12804 / NRRL 8165 / MA-4680).